The following is a 457-amino-acid chain: Pancreatic triacylglycerol lipase (457 aa).

Positions L1–A7 are cleaved as a signal peptide. Intrachain disulfides connect C12–C18 and C99–C110. Residue S161 is the Nucleophile of the active site. D185 acts as the Charge relay system in catalysis. Residues E196, R199, D201, and D204 each coordinate Ca(2+). Residues C246 and C270 are joined by a disulfide bond. The active-site Charge relay system is the H272. 2 disulfides stabilise this stretch: C294–C305 and C308–C313. N343 carries N-linked (GlcNAc...) asparagine glycosylation. One can recognise a PLAT domain in the interval W347 to C457. Cysteines 441 and 457 form a disulfide.

The protein belongs to the AB hydrolase superfamily. Lipase family. As to quaternary structure, forms a 1:1 stoichiometric complex with (pro)colipase/CLPS.

The protein localises to the secreted. It catalyses the reaction a triacylglycerol + H2O = a diacylglycerol + a fatty acid + H(+). The enzyme catalyses 1,2,3-tributanoylglycerol + H2O = dibutanoylglycerol + butanoate + H(+). The catalysed reaction is 1,2,3-tri-(9Z-octadecenoyl)-glycerol + H2O = di-(9Z)-octadecenoylglycerol + (9Z)-octadecenoate + H(+). It carries out the reaction all-trans-retinyl hexadecanoate + H2O = all-trans-retinol + hexadecanoate + H(+). It catalyses the reaction 1,2-di-(9Z-octadecenoyl)-glycerol + H2O = (9Z-octadecenoyl)-glycerol + (9Z)-octadecenoate + H(+). Inhibited by bile salts, is reactivated by (pro)colipase/CLPS. Functionally, plays an important role in fat metabolism. It preferentially splits the esters of long-chain fatty acids at positions 1 and 3, producing mainly 2-monoacylglycerol and free fatty acids, and shows considerably higher activity against insoluble emulsified substrates than against soluble ones. This is Pancreatic triacylglycerol lipase (PNLIP) from Myocastor coypus (Coypu).